Here is a 113-residue protein sequence, read N- to C-terminus: Transcriptional regulator RamA (113 aa).

In terms of domain architecture, HTH araC/xylS-type spans 9–107 (DTIVEWIDDN…NLPPGAYRKE (99 aa)). DNA-binding regions (H-T-H motif) lie at residues 26-47 (DDIARHAGYSKWHLQRLFMQYK) and 74-97 (VYDICLKYGFDSQQTFTRIFTRTF).

In terms of biological role, transcriptional regulator. Binds to regulatory regions of target genes, including efflux pump operon acrAB and outer membrane protein gene tolC. Represses transcription of genes belonging to the flagellar regulon, including flhD, flhB and fliC; probably thereby leading to repression of motility. Represses expression of the flhDC operon in a post-transcriptional manner. Activates expression of acrAB, perhaps thereby conferring multidrug resistance. Involved in indole- and bile-mediated regulation of acrAB; binding of bile to RamA may contribute to activation of expression of acrAB. Plays a role in regulating virulence in mice. The sequence is that of Transcriptional regulator RamA from Salmonella typhimurium (strain LT2 / SGSC1412 / ATCC 700720).